The chain runs to 432 residues: MTLWVLGLNHQTAPMELRERASFVGDALPRALDSLRNLPNVNEAALLSTCNRTELYAETTNAQMLLNWLEQHRPGLQNHLYQYRDAAAVRHLFRVATGLDSMVLGESQILGQVKDSWSMARTHGTLGNTLDRLFQHSFSVAKHARTNTRIGTNPVSIASTAVRLAQDAFSPLNESTVLLIGAGETIQLAAKHLSEGRVQRLLIANRTHAKAQMLASQHGGYALPLTELNLHLAEADIIFSATAAPTPIVTQSNVESALHIRKRKPILLFDLAIPRDIETEVGTLTDAYLYTIDDLERAVEENRHSRREAAETAEAIIELQVKRYMDTLQAQAHQAPLRRLRTFGTTTRDELLTRARRQLANGRPAEEVLEQLAHGLTNRLLHPPTAALREAALANNTELVRAAEQLFPEKPGYHHPTLQTTIVKTDETDPAS.

Substrate contacts are provided by residues 49 to 52 (TCNR), serine 101, 106 to 108 (ESQ), and glutamine 112. Cysteine 50 (nucleophile) is an active-site residue. An NADP(+)-binding site is contributed by 181–186 (GAGETI). Positions 410–432 (KPGYHHPTLQTTIVKTDETDPAS) are disordered.

It belongs to the glutamyl-tRNA reductase family. Homodimer.

The enzyme catalyses (S)-4-amino-5-oxopentanoate + tRNA(Glu) + NADP(+) = L-glutamyl-tRNA(Glu) + NADPH + H(+). It participates in porphyrin-containing compound metabolism; protoporphyrin-IX biosynthesis; 5-aminolevulinate from L-glutamyl-tRNA(Glu): step 1/2. Catalyzes the NADPH-dependent reduction of glutamyl-tRNA(Glu) to glutamate 1-semialdehyde (GSA). This Xylella fastidiosa (strain M23) protein is Glutamyl-tRNA reductase.